The sequence spans 157 residues: Ribosomal RNA large subunit methyltransferase H (157 aa).

S-adenosyl-L-methionine is bound by residues leucine 75, glycine 106, and phenylalanine 125–phenylalanine 130.

Belongs to the RNA methyltransferase RlmH family. In terms of assembly, homodimer.

It is found in the cytoplasm. The enzyme catalyses pseudouridine(1915) in 23S rRNA + S-adenosyl-L-methionine = N(3)-methylpseudouridine(1915) in 23S rRNA + S-adenosyl-L-homocysteine + H(+). In terms of biological role, specifically methylates the pseudouridine at position 1915 (m3Psi1915) in 23S rRNA. This Malacoplasma penetrans (strain HF-2) (Mycoplasma penetrans) protein is Ribosomal RNA large subunit methyltransferase H.